A 146-amino-acid polypeptide reads, in one-letter code: D-aminoacyl-tRNA deacylase (146 aa).

The short motif at 137–138 is the Gly-cisPro motif, important for rejection of L-amino acids element; sequence GP.

Belongs to the DTD family. In terms of assembly, homodimer.

The protein localises to the cytoplasm. It carries out the reaction glycyl-tRNA(Ala) + H2O = tRNA(Ala) + glycine + H(+). The enzyme catalyses a D-aminoacyl-tRNA + H2O = a tRNA + a D-alpha-amino acid + H(+). Functionally, an aminoacyl-tRNA editing enzyme that deacylates mischarged D-aminoacyl-tRNAs. Also deacylates mischarged glycyl-tRNA(Ala), protecting cells against glycine mischarging by AlaRS. Acts via tRNA-based rather than protein-based catalysis; rejects L-amino acids rather than detecting D-amino acids in the active site. By recycling D-aminoacyl-tRNA to D-amino acids and free tRNA molecules, this enzyme counteracts the toxicity associated with the formation of D-aminoacyl-tRNA entities in vivo and helps enforce protein L-homochirality. The polypeptide is D-aminoacyl-tRNA deacylase (Acinetobacter baylyi (strain ATCC 33305 / BD413 / ADP1)).